A 421-amino-acid polypeptide reads, in one-letter code: Serine--tRNA ligase (421 aa).

L-serine is bound at residue 229–231; it reads TSE. Residues 260–262 and Val-276 contribute to the ATP site; that span reads RKE. Glu-283 contacts L-serine. 347–350 contributes to the ATP binding site; sequence EIVS. Thr-383 serves as a coordination point for L-serine.

This sequence belongs to the class-II aminoacyl-tRNA synthetase family. Type-1 seryl-tRNA synthetase subfamily. In terms of assembly, homodimer. The tRNA molecule binds across the dimer.

The protein resides in the cytoplasm. The enzyme catalyses tRNA(Ser) + L-serine + ATP = L-seryl-tRNA(Ser) + AMP + diphosphate + H(+). It catalyses the reaction tRNA(Sec) + L-serine + ATP = L-seryl-tRNA(Sec) + AMP + diphosphate + H(+). It participates in aminoacyl-tRNA biosynthesis; selenocysteinyl-tRNA(Sec) biosynthesis; L-seryl-tRNA(Sec) from L-serine and tRNA(Sec): step 1/1. Its function is as follows. Catalyzes the attachment of serine to tRNA(Ser). Is also able to aminoacylate tRNA(Sec) with serine, to form the misacylated tRNA L-seryl-tRNA(Sec), which will be further converted into selenocysteinyl-tRNA(Sec). The sequence is that of Serine--tRNA ligase from Nitrosopumilus maritimus (strain SCM1).